Reading from the N-terminus, the 561-residue chain is MSEWWKEAVVYQIYPRSFYDANGDGFGDLQGVIQKLDYIKNLGADVIWLSPVFDSPQDDNGYDISDYKNMYEKFGTNEDMFQLIDEVHKRGMKIVMDLVVNHTSDEHAWFAESRKSKDNPYRDYYLWKDPKPDGSEPNNWGSIFSGSAWTYDEGTGQYYLHYFSKKQPDLNWENEAVRREVYDVMRFWMDRGVDGWRMDVIGSISKYTDFPDYETDHSRSYIVGRYHSNGPRLHEFIQEMNREVLSHYDCMTVGEANGSDIEEAKKYTDASRQELNMIFTFEHMDIDKEQNSPNGKWQIKPFDLIALKKTMTRWQTGLMNVGWNTLYFENHDQPRVISRWGNDRKLRKECAKAFATVLHGMKGTPFIYQGEEIGMVNSDMPLEMYDDLEIKNAYRELVVENKTMSEKEFVKAVMIKGRDHARTPMQWDAGKHAGFTAGDPWIPVNSRYQDINVKESLEDQDSIFFYYQKLIQLRKQYKIMIYGDYQLLQENDPQVFSYLREYRGEKLLVVVNLSEEKALFEAPPELIHERWKVLISNYPQERADLKSISLKPYEAVMGISI.

Ca(2+) is bound by residues aspartate 20, asparagine 22, aspartate 24, phenylalanine 26, and aspartate 28. Residue aspartate 199 is the Nucleophile of the active site. Glutamate 255 (proton donor) is an active-site residue.

This sequence belongs to the glycosyl hydrolase 13 family.

The protein resides in the cytoplasm. The catalysed reaction is Hydrolysis of (1-&gt;6)-alpha-D-glucosidic linkages in some oligosaccharides produced from starch and glycogen by alpha-amylase, and in isomaltose.. In terms of biological role, hydrolyzes various disaccharides such as sucrose, maltose, and isomaltose with different efficiencies. Also hydrolyzes longer maltodextrins from maltotriose up to maltohexaose, but not maltoheptaose, palatinose, isomaltotriose, or isomaltotetraose. This Bacillus subtilis (strain 168) protein is Oligo-1,6-glucosidase 1 (malL).